Here is a 262-residue protein sequence, read N- to C-terminus: Lens fiber major intrinsic protein (262 aa).

Residues 1–9 (MRELRSSSF) are Cytoplasmic-facing. Residues 10 to 29 (WRAILAEFLGSLLYTLLGLG) traverse the membrane as a helical segment. At 30–41 (ASLRWAPGPHGV) the chain is on the extracellular side. A helical transmembrane segment spans residues 42 to 59 (LGSALAFGLAQATLVQAL). The Cytoplasmic segment spans residues 60-61 (GH). Residues 62–77 (VSGGHINPAITLAFLL) constitute an intramembrane region (discontinuously helical). The short motif at 68–70 (NPA) is the NPA 1 element. Residues 78–82 (ASQLS) lie on the Cytoplasmic side of the membrane. The helical transmembrane segment at 83-106 (LPRALGYLLAQLLGALAGAGVLYG) threads the bilayer. Residues 107–127 (VTPAAVRGTLGLSALHPSVGP) lie on the Extracellular side of the membrane. Residues 128-148 (GQGTVVELLLTAQFILCVFAS) form a helical membrane-spanning segment. Topologically, residues 149–156 (FDDRHDGR) are cytoplasmic. The helical transmembrane segment at 157–175 (PGSAALPVGFSLALGHLFG) threads the bilayer. Topologically, residues 176–178 (IPF) are extracellular. Positions 179–193 (TGAGMNPARSFAPAV) form an intramembrane region, discontinuously helical. The NPA 2 signature appears at 184-186 (NPA). Residues 194–200 (ITRNFTN) are Extracellular-facing. Residues 201-222 (HWVFWAGPLLGAALAALLYELA) traverse the membrane as a helical segment. Residues 223–262 (LCPRARSMAERLAVLRGEPPAAAPPPEPPAEPLELKTQGL) are Cytoplasmic-facing. The segment at 227-237 (ARSMAERLAVL) is interaction with CALM. The interval 240 to 262 (EPPAAAPPPEPPAEPLELKTQGL) is disordered. Positions 243 to 253 (AAAPPPEPPAE) are enriched in pro residues.

It belongs to the MIP/aquaporin (TC 1.A.8) family. As to quaternary structure, homotetramer; each monomer provides an independent water pore. Two homotetramers on opposing membranes can dimerize, forming a cell-cell junction. Interacts with CALM; the calcium-calmodulin/CALM complex interacts with the cytoplasmic domains of two aquaporins, leading to channel closure. During early stages of lens development, interacts through its C-terminal region with Cx56 and GJA8/Cx45.6. Major component of lens fiber gap junctions.

It localises to the cell membrane. The protein resides in the cell junction. The catalysed reaction is H2O(in) = H2O(out). With respect to regulation, the water channel activity is inhibited by calcium through calmodulin/CALM. Functionally, aquaporins form homotetrameric transmembrane channels, with each monomer independently mediating water transport across the plasma membrane along its osmotic gradient. Specifically expressed in lens fiber cells, this aquaporin is crucial for maintaining lens water homeostasis and transparency. Beyond water permeability, it also acts as a cell-to-cell adhesion molecule, forming thin junctions between lens fiber cells that are essential for maintaining the ordered structure and transparency of the lens. The protein is Lens fiber major intrinsic protein of Gallus gallus (Chicken).